The sequence spans 246 residues: Probable transcriptional regulatory protein NT01CX_1819 (246 aa).

It belongs to the TACO1 family.

It is found in the cytoplasm. This is Probable transcriptional regulatory protein NT01CX_1819 from Clostridium novyi (strain NT).